We begin with the raw amino-acid sequence, 510 residues long: Inositol-3-phosphate synthase (510 aa).

NAD(+) contacts are provided by Gly70, Gly71, Asn72, Asn73, Asp143, Ile180, Gln190, Arg193, Thr230, Ala231, Asn232, Thr233, Gly281, Ser282, Asp306, Ser309, Asn340, Asn341, Asp342, Lys355, Gly393, Asp394, Asp422, and Ser423.

This sequence belongs to the myo-inositol 1-phosphate synthase family. NAD(+) serves as cofactor.

It localises to the cytoplasm. The protein localises to the cytosol. It is found in the nucleus. It carries out the reaction D-glucose 6-phosphate = 1D-myo-inositol 3-phosphate. It participates in polyol metabolism; myo-inositol biosynthesis; myo-inositol from D-glucose 6-phosphate: step 1/2. In terms of biological role, key enzyme in myo-inositol biosynthesis pathway that catalyzes the conversion of glucose 6-phosphate to 1-myo-inositol 1-phosphate in a NAD-dependent manner. The polypeptide is Inositol-3-phosphate synthase (Nicotiana tabacum (Common tobacco)).